The sequence spans 247 residues: uncharacterized protein (247 aa).

This is an uncharacterized protein from Schizosaccharomyces pombe (strain 972 / ATCC 24843) (Fission yeast).